A 36-amino-acid chain; its full sequence is uncharacterized protein (36 aa).

This is an uncharacterized protein from Treponema pallidum (strain Nichols).